A 93-amino-acid polypeptide reads, in one-letter code: Neutrophil cationic peptide 1 type B (93 aa).

An N-terminal signal peptide occupies residues Met1–Ala19. Residues Glu20–Gly62 constitute a propeptide that is removed on maturation. Cystine bridges form between Cys65-Cys93, Cys67-Cys82, and Cys72-Cys92.

Belongs to the alpha-defensin family. In terms of tissue distribution, bone marrow.

The protein resides in the secreted. Functionally, has antibiotic, anti-fungi and antiviral activity. In Cavia porcellus (Guinea pig), this protein is Neutrophil cationic peptide 1 type B.